A 765-amino-acid chain; its full sequence is Multifunctional tryptophan biosynthesis protein (765 aa).

In terms of domain architecture, Glutamine amidotransferase type-1 spans 2–196 (ATLLIDNYDS…LSLRGGNWDE (195 aa)). Position 53-55 (53-55 (GPG)) interacts with L-glutamine. The active-site Nucleophile; for GATase activity is cysteine 81. Residues glutamine 85 and 131 to 132 (SL) contribute to the L-glutamine site. Catalysis depends on for GATase activity residues histidine 170 and glutamate 172. The tract at residues 231–494 (TILSRIYAQR…NLKEFVAELL (264 aa)) is indole-3-glycerol phosphate synthase. Residues 512–765 (QVKICGISSV…VEKAKSINLQ (254 aa)) are N-(5'-phosphoribosyl)anthranilate isomerase.

The catalysed reaction is N-(5-phospho-beta-D-ribosyl)anthranilate = 1-(2-carboxyphenylamino)-1-deoxy-D-ribulose 5-phosphate. The enzyme catalyses 1-(2-carboxyphenylamino)-1-deoxy-D-ribulose 5-phosphate + H(+) = (1S,2R)-1-C-(indol-3-yl)glycerol 3-phosphate + CO2 + H2O. It carries out the reaction chorismate + L-glutamine = anthranilate + pyruvate + L-glutamate + H(+). The protein operates within amino-acid biosynthesis; L-tryptophan biosynthesis; L-tryptophan from chorismate: step 1/5. Its pathway is amino-acid biosynthesis; L-tryptophan biosynthesis; L-tryptophan from chorismate: step 3/5. It participates in amino-acid biosynthesis; L-tryptophan biosynthesis; L-tryptophan from chorismate: step 4/5. In terms of biological role, trifunctional enzyme bearing the Gln amidotransferase (GATase) domain of anthranilate synthase, indole-glycerolphosphate synthase, and phosphoribosylanthranilate isomerase activities. The chain is Multifunctional tryptophan biosynthesis protein (trp1) from Phycomyces blakesleeanus.